The primary structure comprises 87 residues: Large ribosomal subunit protein bL27 (87 aa).

The segment at 1-21 is disordered; sequence MAHKKAGGSSRNGRDSESKRL.

It belongs to the bacterial ribosomal protein bL27 family.

The protein is Large ribosomal subunit protein bL27 of Burkholderia mallei (strain NCTC 10247).